The sequence spans 419 residues: Diaminopimelate decarboxylase (419 aa).

N6-(pyridoxal phosphate)lysine is present on K56. Residues G234 and 274–277 (EPGR) contribute to the pyridoxal 5'-phosphate site. Substrate contacts are provided by R277, R312, and Y316. Residue C343 is the Proton donor of the active site. Residues E344 and Y372 each coordinate substrate. Y372 contributes to the pyridoxal 5'-phosphate binding site.

The protein belongs to the Orn/Lys/Arg decarboxylase class-II family. LysA subfamily. As to quaternary structure, homodimer. The cofactor is pyridoxal 5'-phosphate.

It carries out the reaction meso-2,6-diaminopimelate + H(+) = L-lysine + CO2. It participates in amino-acid biosynthesis; L-lysine biosynthesis via DAP pathway; L-lysine from DL-2,6-diaminopimelate: step 1/1. In terms of biological role, specifically catalyzes the decarboxylation of meso-diaminopimelate (meso-DAP) to L-lysine. In Archaeoglobus fulgidus (strain ATCC 49558 / DSM 4304 / JCM 9628 / NBRC 100126 / VC-16), this protein is Diaminopimelate decarboxylase.